The primary structure comprises 918 residues: Chaperone protein ClpC4, chloroplastic (918 aa).

An i region spans residues 266–515 (LMEYGTNLTK…RLRNAQCKPS (250 aa)). Residues 311-318 (GEPGVGKT) and 653-660 (GPTGVGKS) each bind ATP. The segment at 579-774 (VTEDDVRHAI…LIVMTTNIGS (196 aa)) is II.

It belongs to the ClpA/ClpB family. ClpC subfamily.

It localises to the plastid. The protein resides in the chloroplast. Its function is as follows. Molecular chaperone that may interact with a ClpP-like protease involved in degradation of denatured proteins in the chloroplast. The polypeptide is Chaperone protein ClpC4, chloroplastic (CPLC4) (Oryza sativa subsp. japonica (Rice)).